The sequence spans 40 residues: Light-harvesting protein B800/830/1020 beta-1 chain (40 aa).

The Cytoplasmic segment spans residues 1–20 (ANDIRPLRDFEDEEAQEFHQ). Residues His-19 and His-37 each coordinate a bacteriochlorophyll. The helical transmembrane segment at 21-40 (AAVQAFFLYVAVAFVAHLPV) threads the bilayer.

It belongs to the antenna complex beta subunit family. In terms of assembly, the core complex is formed by different alpha and beta chains, binding bacteriochlorophyll molecules, and arranged most probably in tetrameric structures disposed around the reaction center. The non-pigmented gamma chains may constitute additional components.

It is found in the cell inner membrane. Its function is as follows. Antenna complexes are light-harvesting systems, which transfer the excitation energy to the reaction centers. This chain is Light-harvesting protein B800/830/1020 beta-1 chain, found in Halorhodospira halochloris (Ectothiorhodospira halochloris).